The sequence spans 294 residues: N-acetylmuramic acid 6-phosphate etherase (294 aa).

Residues 54 to 217 (VIKSFEEEGR…STASMIGVGK (164 aa)) enclose the SIS domain. Glu-82 (proton donor) is an active-site residue. The active site involves Glu-113.

The protein belongs to the GCKR-like family. MurNAc-6-P etherase subfamily. In terms of assembly, homodimer.

The enzyme catalyses N-acetyl-D-muramate 6-phosphate + H2O = N-acetyl-D-glucosamine 6-phosphate + (R)-lactate. It functions in the pathway amino-sugar metabolism; N-acetylmuramate degradation. Functionally, specifically catalyzes the cleavage of the D-lactyl ether substituent of MurNAc 6-phosphate, producing GlcNAc 6-phosphate and D-lactate. This Bacillus cereus (strain G9842) protein is N-acetylmuramic acid 6-phosphate etherase.